A 213-amino-acid polypeptide reads, in one-letter code: Uridine kinase (213 aa).

Glycine 15–serine 22 contributes to the ATP binding site.

This sequence belongs to the uridine kinase family.

The protein resides in the cytoplasm. It catalyses the reaction uridine + ATP = UMP + ADP + H(+). It carries out the reaction cytidine + ATP = CMP + ADP + H(+). Its pathway is pyrimidine metabolism; CTP biosynthesis via salvage pathway; CTP from cytidine: step 1/3. The protein operates within pyrimidine metabolism; UMP biosynthesis via salvage pathway; UMP from uridine: step 1/1. The protein is Uridine kinase of Salmonella agona (strain SL483).